The primary structure comprises 371 residues: Beta-1,3-galactosyltransferase 4 (371 aa).

Topologically, residues 1–4 (MPLS) are cytoplasmic. Residues 5–25 (LFRRVLLAVLLLVIIWTLFGP) form a helical; Signal-anchor for type II membrane protein membrane-spanning segment. The Lumenal portion of the chain corresponds to 26–371 (SGLGEELLSL…RCRFIAWFSS (346 aa)). An N-linked (GlcNAc...) asparagine glycan is attached at asparagine 143.

Belongs to the glycosyltransferase 31 family. In terms of tissue distribution, expressed in heart, brain, spleen, kidney, lung and testis.

It is found in the golgi apparatus membrane. The catalysed reaction is a ganglioside GM2 (d18:1(4E)) + UDP-alpha-D-galactose = a ganglioside GM1 (d18:1(4E)) + UDP + H(+). It carries out the reaction a ganglioside GM2 + UDP-alpha-D-galactose = a ganglioside GM1 + UDP + H(+). The enzyme catalyses a ganglioside GD2 (d18:1(4E)) + UDP-alpha-D-galactose = a ganglioside GD1b (d18:1(4E)) + UDP + H(+). It catalyses the reaction a ganglioside GA2 (d18:1(4E)) + UDP-alpha-D-galactose = a ganglioside GA1 (d18:1(4E)) + UDP + H(+). It participates in protein modification; protein glycosylation. Involved in GM1/GD1B/GA1 ganglioside biosynthesis. The sequence is that of Beta-1,3-galactosyltransferase 4 from Mus musculus (Mouse).